We begin with the raw amino-acid sequence, 189 residues long: GTP cyclohydrolase 1 (189 aa).

Zn(2+) contacts are provided by cysteine 78, histidine 81, and cysteine 150.

Belongs to the GTP cyclohydrolase I family. In terms of assembly, homomer.

The catalysed reaction is GTP + H2O = 7,8-dihydroneopterin 3'-triphosphate + formate + H(+). It functions in the pathway cofactor biosynthesis; 7,8-dihydroneopterin triphosphate biosynthesis; 7,8-dihydroneopterin triphosphate from GTP: step 1/1. The sequence is that of GTP cyclohydrolase 1 from Lysinibacillus sphaericus (strain C3-41).